The sequence spans 295 residues: sn-glycerol-3-phosphate transport system permease protein UgpA (295 aa).

Residues 1–11 lie on the Cytoplasmic side of the membrane; that stretch reads MSSFRPVFRSR. A helical membrane pass occupies residues 12 to 32; that stretch reads WLPYLLVAPQLVITVIFFIWP. The Periplasmic portion of the chain corresponds to 33 to 80; the sequence is AGEALWYSLQSVDPFGFSSQFVGLENFVALFHDSYYLDAFWTTIKFSA. The ABC transmembrane type-1 domain maps to 76–284; the sequence is IKFSALVTFS…FLVIILTVVQ (209 aa). A helical transmembrane segment spans residues 81–101; the sequence is LVTFSGLLVSLFFAALVDYVV. The Cytoplasmic segment spans residues 102-109; it reads RGSRFYQT. A helical membrane pass occupies residues 110 to 130; that stretch reads LMLLPYAVAPAVAAVLWIFLF. Topologically, residues 131-157 are periplasmic; it reads NPGRGLITHFLGEFGYDWNHAQNSGQA. Residues 158–178 traverse the membrane as a helical segment; that stretch reads MFLVVFASVWKQISYNFLFFF. Topologically, residues 179–207 are cytoplasmic; it reads AALQSIPRSLVEAAAIDGAGPIRRFFRLS. A helical transmembrane segment spans residues 208 to 228; sequence LPLIAPVSFFLLVVNLVYAFF. The Periplasmic portion of the chain corresponds to 229–262; it reads DTFPVIDAATAGGPVQATTTLIYKIYREGFTGLD. A helical transmembrane segment spans residues 263-283; the sequence is LSASAAQSVVLMFLVIILTVV. The Cytoplasmic portion of the chain corresponds to 284–295; sequence QFRYVESKVRYQ.

It belongs to the binding-protein-dependent transport system permease family. UgpAE subfamily. As to quaternary structure, the complex is composed of two ATP-binding proteins (UgpC), two transmembrane proteins (UgpA and UgpE) and a solute-binding protein (UgpB).

The protein resides in the cell inner membrane. Its function is as follows. Part of the ABC transporter complex UgpBAEC involved in sn-glycerol-3-phosphate (G3P) import. Probably responsible for the translocation of the substrate across the membrane. This chain is sn-glycerol-3-phosphate transport system permease protein UgpA (ugpA), found in Salmonella choleraesuis (strain SC-B67).